A 304-amino-acid polypeptide reads, in one-letter code: MIVRPQQHWLRRIFVWHGSVLSKISSRLLLNFLFSIAVIFMLPWYTHLGIKFTLAPFSILGVAIAIFLGFRNNAGYARYVEARKLWGQLMIASRSLLREVKTTLPDSASVREFARLQIAFAHCLRMTLRKQPQVEVLAHYLKTEDLQRVLASNSPANRILLIMGEWLAVQRRNGQLSDILFISLNDRLNDISAVLAGCERIAYTPIPFAYTLILHRTVYLFCIMLPFALVVDLHYMTPFISVLISYTFISLDCLAEELEDPFGTENNDLPLDAICNAIEIDLLQMNDEAEIPAKVLPDRHYQLT.

4 helical membrane passes run leucine 28–leucine 48, isoleucine 50–phenylalanine 70, valine 194–leucine 214, and leucine 220–isoleucine 240.

It belongs to the anion channel-forming bestrophin (TC 1.A.46) family.

It localises to the cell membrane. The polypeptide is Voltage-dependent anion channel-forming protein YneE (yneE) (Escherichia coli O157:H7).